A 225-amino-acid polypeptide reads, in one-letter code: Cardiotrophin-like cytokine factor 1 (225 aa).

A signal peptide spans 1–27 (MDLRAGDSWGMLACLCTVLWHLPAVPA). The N-linked (GlcNAc...) asparagine glycan is linked to Asn29.

The protein belongs to the IL-6 superfamily. Forms a heteromeric complex with cardiotrophin-like cytokine CRLF1/CLF-1; the CRLF1-CLCF1 complex is a ligand for the ciliary neurotrophic factor receptor/CNTFR. The CRLF1-CLCF1 heterodimer binds SORL1 (via N-terminal ectodomain); within this complex, the interaction is mediated predominantly by the CRLF1 moiety. The tripartite signaling complex formed by CRLF1, CLCF1 and CNTFR also binds SORL1. In terms of tissue distribution, expressed predominantly in lymph nodes, spleen, peripheral blood lymphocytes, bone marrow, and fetal liver.

It is found in the secreted. Functionally, in complex with CRLF1, forms a heterodimeric neurotropic cytokine that plays a crucial role during neuronal development. Also stimulates B-cells. Binds to and activates the ILST/gp130 receptor. The sequence is that of Cardiotrophin-like cytokine factor 1 (CLCF1) from Homo sapiens (Human).